Reading from the N-terminus, the 215-residue chain is Beta-crystallin A3 (215 aa).

An N-acetylmethionine modification is found at methionine 1. A disordered region spans residues 1–24 (METQTVQQELESLPTTKMAQTNPM). Residues 1–30 (METQTVQQELESLPTTKMAQTNPMPGSVGP) form an N-terminal arm region. N-acetylalanine is present on glutamate 2. Beta/gamma crystallin 'Greek key' domains lie at 31–70 (WKITIYDQENFQGKRMEFTSSCPNVSERNFDNVRSLKVEC) and 71–117 (GAWV…RPIC). S-glutathionyl cysteine; alternate is present on residues cysteine 82 and cysteine 117. S-methylcysteine; alternate occurs at positions 82 and 117. The tract at residues 118-123 (SANHKE) is connecting peptide. 2 Beta/gamma crystallin 'Greek key' domains span residues 124–165 (SKIT…KIQC) and 166–214 (GAWV…RRIQ).

It belongs to the beta/gamma-crystallin family. In terms of assembly, homo/heterodimer, or complexes of higher-order. The structure of beta-crystallin oligomers seems to be stabilized through interactions between the N-terminal arms. Interacts with CRYBA1. Specific cleavages in the N-terminal arm occur during lens maturation and give rise to several truncated forms. Post-translationally, isoform A1 contains a N-acetylalanine at position 2.

In terms of biological role, crystallins are the dominant structural components of the vertebrate eye lens. In Bos taurus (Bovine), this protein is Beta-crystallin A3.